A 233-amino-acid chain; its full sequence is MSVLAPDAVEGLFDQIAPIYDNLNDQLSFGLHRLWKRMAVKWSAAKPGDRVLDLCCGSGDLAFLLAKVVGSKGQVIGFDRSQALLSVAGDRARQLASALVIDWQRGDALDLPFPDDHFDAATLGYGLRNVPDIPTVLRQLQRVLKPGARAAILDMHRPYSPLLRQFQQVYLDRWVVPAAAAQNCAAEYEYIDASLEAFPQGQQQVALAIAAGFQRAKHYELAAGLMGVLVVEA.

The protein belongs to the class I-like SAM-binding methyltransferase superfamily. MenG/UbiE family.

The enzyme catalyses demethylphylloquinol + S-adenosyl-L-methionine = phylloquinol + S-adenosyl-L-homocysteine + H(+). It participates in cofactor biosynthesis; phylloquinone biosynthesis. Methyltransferase required for the conversion of 2-phytyl-1,4-beta-naphthoquinol to phylloquinol. The sequence is that of 2-phytyl-1,4-naphtoquinone methyltransferase from Synechococcus elongatus (strain ATCC 33912 / PCC 7942 / FACHB-805) (Anacystis nidulans R2).